The primary structure comprises 641 residues: Anthrax toxin receptor-like (641 aa).

Residues 1–27 (MMSHSPSMPCSALFLLLLLLLPPTFKG) form the signal peptide. The Extracellular portion of the chain corresponds to 28–363 (GSLRYHGPGW…ASQGIVFKRT (336 aa)). Positions 76–247 (DLYLVLDKSG…SALEGVVDPL (172 aa)) constitute a VWFA domain. A divalent metal cation contacts are provided by S84, S86, and T150. The helical transmembrane segment at 364–384 (WLMFLPVLLVTLLLLCCTWKL) threads the bilayer. Topologically, residues 385–641 (CIKPKKLPPP…FPPISKGPKF (257 aa)) are cytoplasmic. The disordered stretch occupies residues 391–455 (LPPPPPKPEK…ARPPPAPLPA (65 aa)). Pro residues predominate over residues 407–436 (PPPSSPPAPGRGPGPGPSAGPGPGPGPSPG).

The protein belongs to the ATR family.

It is found in the membrane. The polypeptide is Anthrax toxin receptor-like (Antxrl) (Mus musculus (Mouse)).